Reading from the N-terminus, the 495-residue chain is Alpha,alpha-trehalose-phosphate synthase [UDP-forming] 56 kDa subunit (495 aa).

Tyr-102 and Asp-156 together coordinate D-glucose 6-phosphate. Positions 293 and 298 each coordinate UDP. Arg-293 and Lys-298 together coordinate UDP-alpha-D-glucose. D-glucose 6-phosphate is bound at residue Arg-331. UDP contacts are provided by residues Ile-370 and 396-400 (LVSYE). UDP-alpha-D-glucose is bound by residues Ile-370 and 392–400 (DGMNLVSYE).

This sequence belongs to the glycosyltransferase 20 family. As to quaternary structure, the trehalose synthase complex is composed of the two catalytic subunits TPS1 and TPS2 and at least one of the two regulatory subunits TPS3 or TSL1.

The protein localises to the cytoplasm. The enzyme catalyses D-glucose 6-phosphate + UDP-alpha-D-glucose = alpha,alpha-trehalose 6-phosphate + UDP + H(+). Its pathway is carbohydrate biosynthesis. Activated by fructose 6-phosphate. Inorganic phosphate inhibits the synthase activity in the complex, but activates the synthase activity in the free monomeric form. In terms of biological role, synthase catalytic subunit of the trehalose synthase complex that catalyzes the production of trehalose from glucose-6-phosphate and UDP-alpha-D-glucose in a two step process. Can function independently of the complex. This chain is Alpha,alpha-trehalose-phosphate synthase [UDP-forming] 56 kDa subunit, found in Saccharomyces cerevisiae (strain ATCC 204508 / S288c) (Baker's yeast).